Consider the following 1252-residue polypeptide: DNA-directed RNA polymerase subunit beta (1252 aa).

The protein belongs to the RNA polymerase beta chain family. In terms of assembly, the RNAP catalytic core consists of 2 alpha, 1 beta, 1 beta' and 1 omega subunit. When a sigma factor is associated with the core the holoenzyme is formed, which can initiate transcription.

It catalyses the reaction RNA(n) + a ribonucleoside 5'-triphosphate = RNA(n+1) + diphosphate. Functionally, DNA-dependent RNA polymerase catalyzes the transcription of DNA into RNA using the four ribonucleoside triphosphates as substrates. This is DNA-directed RNA polymerase subunit beta from Chlamydia pneumoniae (Chlamydophila pneumoniae).